Here is a 740-residue protein sequence, read N- to C-terminus: ATP-dependent RNA helicase DDX1 (740 aa).

The interval 1–295 (MAAFSEMGVM…APKALIVEPS (295 aa)) is necessary for interaction with HNRNPK. Residues 1 to 448 (MAAFSEMGVM…DTVHHVVVPV (448 aa)) form an interaction with dsRNA region. Residues 1–525 (MAAFSEMGVM…KIDCDNLEQY (525 aa)) are necessary for interaction with RELA. Residues 2-428 (AAFSEMGVMP…SEKIMHFPTW (427 aa)) form the Helicase ATP-binding domain. 46–53 (AETGSGKT) contributes to the ATP binding site. The 178-residue stretch at 70 to 247 (DQQEGKKGKT…LKFNFGEEEF (178 aa)) folds into the B30.2/SPRY domain. Lys-239 and Lys-268 each carry N6-acetyllysine. Lys-281 is modified (N6-acetyllysine; alternate). A Glycyl lysine isopeptide (Lys-Gly) (interchain with G-Cter in SUMO2); alternate cross-link involves residue Lys-281. A DEAD box motif is present at residues 370 to 373 (DEAD). Ser-481 is subject to Phosphoserine. The 189-residue stretch at 493–681 (KGEYAVRAIK…QVEPDIKVPV (189 aa)) folds into the Helicase C-terminal domain. Residues 525-740 (YFMQQGGGPD…YLPNQLFRTF (216 aa)) are necessary for interaction with HNRNPK.

Belongs to the DEAD box helicase family. DDX1 subfamily. In terms of assembly, found in a multi-helicase-TICAM1 complex at least composed of DHX36, DDX1, DDX21 and TICAM1; this complex exists in resting cells with or without poly(I:C) RNA ligand stimulation. Interacts with DHX36. Interacts (via B30.2/SPRY domain) with DDX21 (via N-terminus); this interaction serves as bridges to TICAM1. Interacts with FAM98A (via N- and C-terminus). Interacts with MBNL1. Interacts with CSTF2. Interacts with HNRNPK. Interacts with ATM. Interacts with RELA (via C-terminus). Component of the tRNA-splicing ligase complex. Interacts with PHF5A (via C-terminus). Interacts with PQBP1. Interacts with ERCC6. Phosphorylated by ATM kinase; phosphorylation is increased in response to ionizing radiation (IR). In terms of tissue distribution, testis-specific. Expressed in the germ line stem cells, spermatogonia and spermatocytes of the testis. Also expressed in the seminoma and nonseminoma types of testicular germ cell tumors (TGCTs) (at protein level).

Its subcellular location is the nucleus. The protein localises to the cytoplasm. The protein resides in the cytosol. It is found in the cytoplasmic granule. It localises to the mitochondrion. The enzyme catalyses ATP + H2O = ADP + phosphate + H(+). Functionally, acts as an ATP-dependent RNA helicase, able to unwind both RNA-RNA and RNA-DNA duplexes. Possesses 5' single-stranded RNA overhang nuclease activity. Possesses ATPase activity on various RNA, but not DNA polynucleotides. May play a role in RNA clearance at DNA double-strand breaks (DSBs), thereby facilitating the template-guided repair of transcriptionally active regions of the genome. Together with RELA, acts as a coactivator to enhance NF-kappa-B-mediated transcriptional activation. Acts as a positive transcriptional regulator of cyclin CCND2 expression. Binds to the cyclin CCND2 promoter region. Associates with chromatin at the NF-kappa-B promoter region via association with RELA. Binds to poly(A) RNA. May be involved in 3'-end cleavage and polyadenylation of pre-mRNAs. Component of the tRNA-splicing ligase complex required to facilitate the enzymatic turnover of catalytic subunit RTCB: together with archease (ZBTB8OS), acts by facilitating the guanylylation of RTCB, a key intermediate step in tRNA ligation. Component of a multi-helicase-TICAM1 complex that acts as a cytoplasmic sensor of viral double-stranded RNA (dsRNA) and plays a role in the activation of a cascade of antiviral responses including the induction of pro-inflammatory cytokines via the adapter molecule TICAM1. Specifically binds (via helicase ATP-binding domain) on both short and long poly(I:C) dsRNA. The polypeptide is ATP-dependent RNA helicase DDX1 (Ddx1) (Mus musculus (Mouse)).